Reading from the N-terminus, the 77-residue chain is UPF0248 protein Pcal_0252 (77 aa).

This sequence belongs to the UPF0248 family.

The protein is UPF0248 protein Pcal_0252 of Pyrobaculum calidifontis (strain DSM 21063 / JCM 11548 / VA1).